The following is a 330-amino-acid chain: Ferredoxin--NADP reductase (330 aa).

Residues E35, Q43, Y48, V90, F123, D285, and T326 each coordinate FAD.

This sequence belongs to the ferredoxin--NADP reductase type 2 family. In terms of assembly, homodimer. Requires FAD as cofactor.

It carries out the reaction 2 reduced [2Fe-2S]-[ferredoxin] + NADP(+) + H(+) = 2 oxidized [2Fe-2S]-[ferredoxin] + NADPH. The polypeptide is Ferredoxin--NADP reductase (Streptococcus equi subsp. zooepidemicus (strain MGCS10565)).